The chain runs to 953 residues: MTDATPDYKDTVNLPQTTFEMRANAATREPQLQAFWAQHKIYETLQQTNPGEVFILHDGPPYANGALHIGHALNKILKDIINKYQLLRGRKVHYRPGWDCHGLPIELKVLQNLKPEQRAQLTPLTLRQQAKEFALKTVAEQKQSFQRYGVWGDWAHPYLTLTPDYEAAQIGVFGEMVLRGYIYRGLKPVHWSPSSKTALAEAELEYPEGHTSRSLYAAFEVIELPQGLAKAWYNALGKLGVAIWTTTPWTIPANLAVSVNPDLTYALVEVQPSERYKHLIVAKDLVERLSDTLGRTLKVVATAKGADLEHSRYRHPLFEREGKILIGGDYVTTESGTGLVHTAPGHGLEDYGVGQRYGLPILSPVDENGCFTAEAGPFAGLNVLQEGNAAVIAALQECGALLKEEPYVHKYPYDWRTKKPTIFRATEQWFASVEGFRDAALRAIAEVKWIPAQGENRITAMVAERSDWCISRQRSWGVPIPVFYDKETGEPLLTAETIAHVQAIIRDRGSDAWWELSVAELLPESLRDQADRYEKGTDTMDVWFDSGSSWAAVLGDQQADLYLEGSDQHRGWFQSSLLTRVAVKGQAPYKAVLTHGFVLDEQGRKMSKSLGNVTDPREVIEGGKNQKQDPPYGADVLRLWVSSVDYANDVPIGKNILRQLADVYRKIRNTARFLLGNLHDFEPEQDMIPYAQLPALDRYMLHRLHEVFSEVTAAFDSFQFYRFFQTIQNLCVVDLSNFYLDIAKDRLYISAATGDRRRSCQTVLAIALQNLARAIAPVLPHLAEDIWQHLPFKTPYLSVFQSGWVQLSAQWQDNALAAEWQRLRQLRLEVNKVLEKARAEKLIGSSLEAKVWLYVADSEWRDRLAQMNPRDALSGNGVDELRYLFLVSQVELMPQPQAVDVPYVLEAEGLWIGVGHAQGEKCVRCWNYSESVGQSALHPQLCDRCQAALQGEF.

A 'HIGH' region motif is present at residues 61-71; the sequence is PYANGALHIGH. Glu564 contributes to the L-isoleucyl-5'-AMP binding site. The 'KMSKS' region signature appears at 605-609; that stretch reads KMSKS. Lys608 serves as a coordination point for ATP. The Zn(2+) site is built by Cys922, Cys925, Cys942, and Cys945.

This sequence belongs to the class-I aminoacyl-tRNA synthetase family. IleS type 1 subfamily. As to quaternary structure, monomer. Zn(2+) serves as cofactor.

The protein localises to the cytoplasm. It carries out the reaction tRNA(Ile) + L-isoleucine + ATP = L-isoleucyl-tRNA(Ile) + AMP + diphosphate. Catalyzes the attachment of isoleucine to tRNA(Ile). As IleRS can inadvertently accommodate and process structurally similar amino acids such as valine, to avoid such errors it has two additional distinct tRNA(Ile)-dependent editing activities. One activity is designated as 'pretransfer' editing and involves the hydrolysis of activated Val-AMP. The other activity is designated 'posttransfer' editing and involves deacylation of mischarged Val-tRNA(Ile). This is Isoleucine--tRNA ligase from Thermosynechococcus vestitus (strain NIES-2133 / IAM M-273 / BP-1).